A 390-amino-acid polypeptide reads, in one-letter code: Chorismate synthase 2 (390 aa).

Residues arginine 39 and arginine 45 each coordinate NADP(+). FMN is bound by residues 132 to 134, 253 to 254, glycine 298, 313 to 317, and arginine 339; these read RSS, NA, and KPIPT.

Belongs to the chorismate synthase family. As to quaternary structure, homotetramer. FMNH2 is required as a cofactor.

The catalysed reaction is 5-O-(1-carboxyvinyl)-3-phosphoshikimate = chorismate + phosphate. Its pathway is metabolic intermediate biosynthesis; chorismate biosynthesis; chorismate from D-erythrose 4-phosphate and phosphoenolpyruvate: step 7/7. Catalyzes the anti-1,4-elimination of the C-3 phosphate and the C-6 proR hydrogen from 5-enolpyruvylshikimate-3-phosphate (EPSP) to yield chorismate, which is the branch point compound that serves as the starting substrate for the three terminal pathways of aromatic amino acid biosynthesis. This reaction introduces a second double bond into the aromatic ring system. This is Chorismate synthase 2 from Bacillus thuringiensis subsp. konkukian (strain 97-27).